The chain runs to 199 residues: Recombination protein RecR (199 aa).

The segment at 57–72 (CSICGNITDKDPCYVC) adopts a C4-type zinc-finger fold. Residues 80-176 (TIVCVVQDSR…RVTRIAHGLP (97 aa)) form the Toprim domain.

It belongs to the RecR family.

In terms of biological role, may play a role in DNA repair. It seems to be involved in an RecBC-independent recombinational process of DNA repair. It may act with RecF and RecO. This is Recombination protein RecR from Exiguobacterium sibiricum (strain DSM 17290 / CCUG 55495 / CIP 109462 / JCM 13490 / 255-15).